The chain runs to 256 residues: Kallikrein-15 (256 aa).

The first 16 residues, 1 to 16 (MWLLLTLSFLLASTAA), serve as a signal peptide directing secretion. Positions 17 to 21 (QDGDK) are cleaved as a propeptide — activation peptide. A Peptidase S1 domain is found at 22–254 (LLEGDECAPH…YLEWIRETMK (233 aa)). Cysteine 47 and cysteine 63 are disulfide-bonded. Residues histidine 62 and aspartate 106 each act as charge relay system in the active site. 3 disulfide bridges follow: cysteine 138-cysteine 215, cysteine 180-cysteine 194, and cysteine 205-cysteine 230. An N-linked (GlcNAc...) asparagine glycan is attached at asparagine 171. Catalysis depends on serine 209, which acts as the Charge relay system. N-linked (GlcNAc...) asparagine glycosylation occurs at asparagine 232.

This sequence belongs to the peptidase S1 family. Kallikrein subfamily. Highest expression in the thyroid gland. Also expressed in the prostate, salivary, and adrenal glands and in the colon testis and kidney.

Its subcellular location is the secreted. In terms of biological role, protease whose physiological substrate is not yet known. This Homo sapiens (Human) protein is Kallikrein-15 (KLK15).